The primary structure comprises 183 residues: Deoxyuridine 5'-triphosphate nucleotidohydrolase (183 aa).

Substrate contacts are provided by residues 67–69 (RSG), Asn80, 84–86 (TID), and Lys94. Positions 138–183 (RAEGGFGSTGGHAGLDPASGTSGQVAEGGPTGGNRYASVVSDREGQ) are disordered. Residues 141–150 (GGFGSTGGHA) show a composition bias toward gly residues.

This sequence belongs to the dUTPase family. Requires Mg(2+) as cofactor.

It carries out the reaction dUTP + H2O = dUMP + diphosphate + H(+). It participates in pyrimidine metabolism; dUMP biosynthesis; dUMP from dCTP (dUTP route): step 2/2. This enzyme is involved in nucleotide metabolism: it produces dUMP, the immediate precursor of thymidine nucleotides and it decreases the intracellular concentration of dUTP so that uracil cannot be incorporated into DNA. The polypeptide is Deoxyuridine 5'-triphosphate nucleotidohydrolase (Streptomyces coelicolor (strain ATCC BAA-471 / A3(2) / M145)).